We begin with the raw amino-acid sequence, 227 residues long: ATP synthase F(0) complex subunit a (227 aa).

The next 6 membrane-spanning stretches (helical) occupy residues 9–29 (FASP…LPWV), 69–89 (WALL…LGLL), 98–118 (QLSL…IIGM), 132–152 (EGTP…SLFI), 165–185 (LTAG…LMPM), and 190–210 (AILT…VAMI).

The protein belongs to the ATPase A chain family. In terms of assembly, component of the ATP synthase complex composed at least of ATP5F1A/subunit alpha, ATP5F1B/subunit beta, ATP5MC1/subunit c (homooctomer), MT-ATP6/subunit a, MT-ATP8/subunit 8, ATP5ME/subunit e, ATP5MF/subunit f, ATP5MG/subunit g, ATP5MK/subunit k, ATP5MJ/subunit j, ATP5F1C/subunit gamma, ATP5F1D/subunit delta, ATP5F1E/subunit epsilon, ATP5PF/subunit F6, ATP5PB/subunit b, ATP5PD/subunit d, ATP5PO/subunit OSCP. ATP synthase complex consists of a soluble F(1) head domain (subunits alpha(3) and beta(3)) - the catalytic core - and a membrane F(0) domain - the membrane proton channel (subunits c, a, 8, e, f, g, k and j). These two domains are linked by a central stalk (subunits gamma, delta, and epsilon) rotating inside the F1 region and a stationary peripheral stalk (subunits F6, b, d, and OSCP). Interacts with DNAJC30; interaction is direct.

It is found in the mitochondrion inner membrane. It carries out the reaction H(+)(in) = H(+)(out). Its function is as follows. Subunit a, of the mitochondrial membrane ATP synthase complex (F(1)F(0) ATP synthase or Complex V) that produces ATP from ADP in the presence of a proton gradient across the membrane which is generated by electron transport complexes of the respiratory chain. ATP synthase complex consist of a soluble F(1) head domain - the catalytic core - and a membrane F(1) domain - the membrane proton channel. These two domains are linked by a central stalk rotating inside the F(1) region and a stationary peripheral stalk. During catalysis, ATP synthesis in the catalytic domain of F(1) is coupled via a rotary mechanism of the central stalk subunits to proton translocation. With the subunit c (ATP5MC1), forms the proton-conducting channel in the F(0) domain, that contains two crucial half-channels (inlet and outlet) that facilitate proton movement from the mitochondrial intermembrane space (IMS) into the matrix. Protons are taken up via the inlet half-channel and released through the outlet half-channel, following a Grotthuss mechanism. The polypeptide is ATP synthase F(0) complex subunit a (Carassius auratus (Goldfish)).